Consider the following 849-residue polypeptide: MLWALWPRWLADKMLPLLGAVLLQKREKRGPLWRHWRRETYPYYDLQVKVLRATNIRGTDLLSKADCYVQLWLPTASPSPAQTRIVANCSDPEWNETFHYQIHGAVKNVLELTLYDKDILGSDQLSLLLFDLRSLKCGQPHKHTFPLNHQDSQELQVEFVLEKSQVPASEVITNGVLVAHPCLRIQGTLRGDGTAPREEYGSRQLQLAVPGAYEKPQLLPLQPPTEPGLPPTFTFHVNPVLSSRLHVELMELLAAVQSGPSAELEAQTSKLGEGGILLSSLPLGQEEQCSVALGEGQEVALSMKVEMSSGDLDLRLGFDLSDGEQEFLDRRKQVVSKALQQVLGLSEALDSGQVPVVAVLGSGGGTRAMSSLYGSLAGLQELGLLDTVTYLSGVSGSTWCISTLYRDPAWSQVALQGPIERAQVHVCSSKMGALSTERLQYYTQELGVRERSGHSVSLIDLWGLLVEYLLYQEENPAKLSDQQEAVRQGQNPYPIYTSVNVRTNLSGEDFAEWCEFTPYEVGFPKYGAYVPTELFGSELFMGRLLQLQPEPRICYLQGMWGSAFATSLDEIFLKTAGSGLSFLEWYRGSVNITDDCQKPQLHNPSRLRTRLLTPQGPFSQAVLDIFTSRFTSAQSFNFTRGLCLHKDYVAGREFVAWKDTHPDAFPNQLTPMRDCLYLVDGGFAINSPFPLALLPQRAVDLILSFDYSLEAPFEVLKMTEKYCLDRGIPFPSIEVGPEDMEEARECYLFAKAEDPRSPIVLHFPLVNRTFRTHLAPGVERQTAEEKAFGDFVINRPDTPYGMMNFTYEPQDFYRLVALSRYNVLNNVETLKCALQLALDRHQARERAGA.

A C2 domain is found at 27–145; sequence EKRGPLWRHW…KCGQPHKHTF (119 aa). Positions 60, 66, 116, 118, and 123 each coordinate Ca(2+). A PLA2c domain is found at 306-849; it reads EMSSGDLDLR…RHQARERAGA (544 aa). Catalysis depends on Ser-395, which acts as the Nucleophile. Asp-680 (proton acceptor) is an active-site residue.

Requires Ca(2+) as cofactor. Expressed in myocardium (at protein level).

The protein resides in the cytoplasm. It is found in the cytosol. The protein localises to the cell membrane. Its subcellular location is the mitochondrion. The catalysed reaction is a 1,2-diacyl-sn-glycero-3-phosphocholine + H2O = a 1-acyl-sn-glycero-3-phosphocholine + a fatty acid + H(+). It catalyses the reaction a 1-O-alkyl-2-acyl-sn-glycero-3-phosphocholine + H2O = a 1-O-alkyl-sn-glycero-3-phosphocholine + a fatty acid + H(+). It carries out the reaction 1-hexadecanoyl-2-(9Z-octadecenoyl)-sn-glycero-3-phosphocholine + H2O = 2-(9Z-octadecenoyl)-sn-glycero-3-phosphocholine + hexadecanoate + H(+). The enzyme catalyses 1-hexadecanoyl-2-(9Z,12Z-octadecadienoyl)-sn-glycero-3-phosphocholine + H2O = (9Z,12Z)-octadecadienoate + 1-hexadecanoyl-sn-glycero-3-phosphocholine + H(+). The catalysed reaction is 1-hexadecanoyl-2-(5Z,8Z,11Z,14Z-eicosatetraenoyl)-sn-glycero-3-phosphocholine + H2O = 1-hexadecanoyl-sn-glycero-3-phosphocholine + (5Z,8Z,11Z,14Z)-eicosatetraenoate + H(+). It catalyses the reaction 1-hexadecanoyl-2-(9Z,12Z-octadecadienoyl)-sn-glycero-3-phosphoethanolamine + H2O = 1-hexadecanoyl-sn-glycero-3-phosphoethanolamine + (9Z,12Z)-octadecadienoate + H(+). It carries out the reaction 1-hexadecanoyl-2-(5Z,8Z,11Z,14Z-eicosatetraenoyl)-sn-glycero-3-phosphoethanolamine + H2O = 1-hexadecanoyl-sn-glycero-3-phosphoethanolamine + (5Z,8Z,11Z,14Z)-eicosatetraenoate + H(+). The enzyme catalyses 1-(5Z,8Z,11Z,14Z-eicosatetraenoyl)-2-O-hexadecyl-sn-glycero-3-phosphocholine + H2O = 2-O-hexadecyl-sn-glycero-3-phosphocholine + (5Z,8Z,11Z,14Z)-eicosatetraenoate + H(+). The catalysed reaction is 1-O-hexadecyl-2-(5Z,8Z,11Z,14Z)-eicosatetraenoyl-sn-glycero-3-phosphocholine + H2O = 1-O-hexadecyl-sn-glycero-3-phosphocholine + (5Z,8Z,11Z,14Z)-eicosatetraenoate + H(+). It catalyses the reaction 1-hexadecanoyl-sn-glycero-3-phosphocholine + H2O = sn-glycerol 3-phosphocholine + hexadecanoate + H(+). With respect to regulation, stimulated by cytosolic Ca(2+). Functionally, has calcium-dependent phospholipase and lysophospholipase activities with a potential role in membrane lipid remodeling and biosynthesis of lipid mediators. Preferentially hydrolyzes the ester bond of the fatty acyl group attached at sn-2 position of phospholipids (phospholipase A2 activity). Selectively hydrolyzes sn-2 arachidonoyl group from membrane phospholipids, providing the precursor for eicosanoid biosynthesis. In myocardial mitochondria, plays a major role in arachidonate release that is metabolically channeled to the formation of cardioprotective eicosanoids, epoxyeicosatrienoates (EETs). The sequence is that of Cytosolic phospholipase A2 zeta (PLA2G4F) from Homo sapiens (Human).